Here is a 327-residue protein sequence, read N- to C-terminus: Acetyl-coenzyme A carboxylase carboxyl transferase subunit alpha (327 aa).

One can recognise a CoA carboxyltransferase C-terminal domain in the interval 46-299; that stretch reads LEARAIQLRR…RQVLLRHLKD (254 aa).

It belongs to the AccA family. Acetyl-CoA carboxylase is a heterohexamer composed of biotin carboxyl carrier protein (AccB), biotin carboxylase (AccC) and two subunits each of ACCase subunit alpha (AccA) and ACCase subunit beta (AccD).

Its subcellular location is the cytoplasm. The catalysed reaction is N(6)-carboxybiotinyl-L-lysyl-[protein] + acetyl-CoA = N(6)-biotinyl-L-lysyl-[protein] + malonyl-CoA. It functions in the pathway lipid metabolism; malonyl-CoA biosynthesis; malonyl-CoA from acetyl-CoA: step 1/1. Its function is as follows. Component of the acetyl coenzyme A carboxylase (ACC) complex. First, biotin carboxylase catalyzes the carboxylation of biotin on its carrier protein (BCCP) and then the CO(2) group is transferred by the carboxyltransferase to acetyl-CoA to form malonyl-CoA. This Synechococcus elongatus (strain ATCC 33912 / PCC 7942 / FACHB-805) (Anacystis nidulans R2) protein is Acetyl-coenzyme A carboxylase carboxyl transferase subunit alpha.